We begin with the raw amino-acid sequence, 338 residues long: Ribosomal RNA small subunit methyltransferase C (338 aa).

This sequence belongs to the methyltransferase superfamily. RsmC family. As to quaternary structure, monomer.

Its subcellular location is the cytoplasm. The enzyme catalyses guanosine(1207) in 16S rRNA + S-adenosyl-L-methionine = N(2)-methylguanosine(1207) in 16S rRNA + S-adenosyl-L-homocysteine + H(+). Specifically methylates the guanine in position 1207 of 16S rRNA in the 30S particle. The protein is Ribosomal RNA small subunit methyltransferase C of Buchnera aphidicola subsp. Acyrthosiphon pisum (strain APS) (Acyrthosiphon pisum symbiotic bacterium).